We begin with the raw amino-acid sequence, 325 residues long: Ribosomal RNA small subunit methyltransferase C (325 aa).

Belongs to the methyltransferase superfamily. RsmC family. Monomer.

It is found in the cytoplasm. The enzyme catalyses guanosine(1207) in 16S rRNA + S-adenosyl-L-methionine = N(2)-methylguanosine(1207) in 16S rRNA + S-adenosyl-L-homocysteine + H(+). Functionally, specifically methylates the guanine in position 1207 of 16S rRNA in the 30S particle. The sequence is that of Ribosomal RNA small subunit methyltransferase C from Alcanivorax borkumensis (strain ATCC 700651 / DSM 11573 / NCIMB 13689 / SK2).